The primary structure comprises 248 residues: MDQPAVATASTSIREDLVGGESFITASKPAQKTSSFEREGWWRIALTDTPIPGTYHLKTFIEESLLNPVIATYNFKNEGRKKPPLVQRNNPVLNDLPQYMPPDFLDLLKKQVATYSFKDKPRPSPSTLVDKDQSLQLSPGQYNVLPAPVPKYASRSCVFRSTVQRFPTTYFIPHEGPGPGHYNVKMPPTSSVTSCFQSRVPRFLPSCSKTPGPGAYTTLRQFPKQSPTIAKMGQEHSLFFNNNNWLLK.

Interacts with histone H3. Interacts with histone H4.

It is found in the cytoplasm. Its subcellular location is the nucleus. Functionally, maternal factor that plays a role in epigenetic chromatin reprogramming during early development of the zygote. Involved in the regulation of gametic DNA demethylation by inducing the conversion of the modified genomic base 5-methylcytosine (5mC) into 5-hydroxymethylcytosine (5hmC). The sequence is that of Protein STPG4 from Homo sapiens (Human).